Reading from the N-terminus, the 243-residue chain is Triosephosphate isomerase (243 aa).

Position 9–11 (9–11 (NWK)) interacts with substrate. His96 functions as the Electrophile in the catalytic mechanism. Glu165 functions as the Proton acceptor in the catalytic mechanism. Residues Gly171, Ser204, and 225-226 (GG) contribute to the substrate site.

It belongs to the triosephosphate isomerase family. As to quaternary structure, homodimer.

It localises to the cytoplasm. It catalyses the reaction D-glyceraldehyde 3-phosphate = dihydroxyacetone phosphate. It functions in the pathway carbohydrate biosynthesis; gluconeogenesis. It participates in carbohydrate degradation; glycolysis; D-glyceraldehyde 3-phosphate from glycerone phosphate: step 1/1. In terms of biological role, involved in the gluconeogenesis. Catalyzes stereospecifically the conversion of dihydroxyacetone phosphate (DHAP) to D-glyceraldehyde-3-phosphate (G3P). The chain is Triosephosphate isomerase from Prochlorococcus marinus (strain MIT 9211).